The primary structure comprises 309 residues: MTSVLHYSLLLLLLGVVILTTPVLANLKPRFFYEPPPIEKPPTYEPPPFYKPPYYPPPVHHPPPEYQPPHEKTPPEYLPPPHEKPPPEYLPPHEKPPPEYQPPHEKPPHENPPPEHQPPHEKPPEHQPPHEKPPPEYEPPHEKPPPEYQPPHEKPPPEYQPPHEKPPPEYQPPHEKPPPEHQPPHEKPPEHQPPHEKPPPEYQPPHEKPPPEYQPPQEKPPHEKPPPEYQPPHEKPPPEHQPPHEKPPPVYPPPYEKPPPVYEPPYEKPPPVVYPPPHEKPPIYEPPPLEKPPVYNPPPYGRYPPSKKN.

Residues Met-1–Ala-25 form the signal peptide. Positions Pro-56 to Gln-67 are enriched in pro residues. The disordered stretch occupies residues Pro-56 to Asn-309. Composition is skewed to basic and acidic residues over residues Pro-81–Pro-210 and Lys-219–Pro-247. Composition is skewed to pro residues over residues Pro-248–Pro-276 and Ile-283–Arg-302.

The protein belongs to the nodulin 75 family.

Involved in early stages of root nodule development. This is Early nodulin-75 (ENOD2A) from Glycine max (Soybean).